An 89-amino-acid polypeptide reads, in one-letter code: MKLTCVLIVAVLFLTACQLATAENSREEQGYSAVRSSDQIQDSDLKLTKSCTDDFEPCEAGFENCCSKSCFEFEDVYVCGVSIDYYDSR.

Residues 1–22 (MKLTCVLIVAVLFLTACQLATA) form the signal peptide. Positions 23 to 49 (ENSREEQGYSAVRSSDQIQDSDLKLTK) are excised as a propeptide. Cystine bridges form between Cys-51–Cys-66, Cys-58–Cys-70, and Cys-65–Cys-79. Cys-79 carries the cysteine amide modification. Residues 80 to 89 (GVSIDYYDSR) constitute a propeptide that is removed on maturation.

It belongs to the conotoxin O1 superfamily. As to expression, expressed by the venom duct.

The protein localises to the secreted. The sequence is that of Conotoxin Bu5 from Conus bullatus (Bubble cone).